Reading from the N-terminus, the 601-residue chain is ATP-dependent rRNA helicase SPB4 (601 aa).

The short motif at Leu14–Ala42 is the Q motif element. The Helicase ATP-binding domain maps to Ile45–Ile228. Ala58–Thr65 lines the ATP pocket. The DEAD box signature appears at Asp176–Asp179. Residues Val257–Arg419 enclose the Helicase C-terminal domain. Positions Lys507 to Glu575 form a coiled coil. The span at Leu532–Glu554 shows a compositional bias: basic and acidic residues. The disordered stretch occupies residues Leu532 to Thr576.

Belongs to the DEAD box helicase family. DDX55/SPB4 subfamily. Component of pre-60S ribosomal complexes.

The protein resides in the nucleus. It localises to the nucleolus. It carries out the reaction ATP + H2O = ADP + phosphate + H(+). Functionally, ATP-binding RNA helicase involved in the biogenesis of 60S ribosomal subunits. Binds 90S pre-ribosomal particles and dissociates from pre-60S ribosomal particles after processing of 27SB pre-rRNA. Required for the normal formation of 18S rRNA through the processing of pre-rRNAs at sites A0, A1 and A2, and the normal formation of 25S and 5.8S rRNAs through the processing of pre-rRNAs at sites C1 and C2. The polypeptide is ATP-dependent rRNA helicase SPB4 (Meyerozyma guilliermondii (strain ATCC 6260 / CBS 566 / DSM 6381 / JCM 1539 / NBRC 10279 / NRRL Y-324) (Yeast)).